We begin with the raw amino-acid sequence, 108 residues long: Competence protein ComGC (108 aa).

The N-terminal stretch at 1–13 (MKKMMTFLKKAKV) is a signal peptide. Residues 14–39 (KAFTLVEMLVVLLIISVLFLLFVPNL) form a may be involved in polymerization of ComGC region. The residue at position 16 (Phe-16) is an N-methylphenylalanine. A helical transmembrane segment spans residues 16–36 (FTLVEMLVVLLIISVLFLLFV).

It belongs to the ComGC family. As to quaternary structure, the transformation pili are flexible filaments, consisting mainly of the major pilin ComGC and smaller amounts of the minor pilins, including at least ComGD, ComGF and ComGG, and perhaps ComGE. Homodimer. Forms higher-order multimers. Interacts with ComGG; the interaction is probably direct. In terms of processing, undergoes proteolytic cleavage.

It localises to the cell membrane. The protein resides in the cell surface. Its subcellular location is the fimbrium. The protein localises to the secreted. Its function is as follows. Major component of the type IV-like pilus (T4P) that plays a role in transformation. Transformation pili are dynamically extended and retracted, perhaps thereby promoting DNA uptake and transformation. Required for transformation. Required for DNA binding. The chain is Competence protein ComGC from Streptococcus pneumoniae serotype 4 (strain ATCC BAA-334 / TIGR4).